Consider the following 240-residue polypeptide: ATP-dependent dethiobiotin synthetase BioD (240 aa).

12–17 (EIGKTV) contributes to the ATP binding site. Residue Thr-16 participates in Mg(2+) binding. Lys-37 is an active-site residue. Ser-41 is a binding site for substrate. Residues Asp-54, 115–118 (EGSG), 179–180 (NQ), and 207–209 (PYI) contribute to the ATP site. Positions 54 and 115 each coordinate Mg(2+).

This sequence belongs to the dethiobiotin synthetase family. Homodimer. The cofactor is Mg(2+).

The protein resides in the cytoplasm. It carries out the reaction (7R,8S)-7,8-diammoniononanoate + CO2 + ATP = (4R,5S)-dethiobiotin + ADP + phosphate + 3 H(+). It participates in cofactor biosynthesis; biotin biosynthesis; biotin from 7,8-diaminononanoate: step 1/2. In terms of biological role, catalyzes a mechanistically unusual reaction, the ATP-dependent insertion of CO2 between the N7 and N8 nitrogen atoms of 7,8-diaminopelargonic acid (DAPA, also called 7,8-diammoniononanoate) to form a ureido ring. This chain is ATP-dependent dethiobiotin synthetase BioD, found in Clostridium acetobutylicum (strain ATCC 824 / DSM 792 / JCM 1419 / IAM 19013 / LMG 5710 / NBRC 13948 / NRRL B-527 / VKM B-1787 / 2291 / W).